Reading from the N-terminus, the 200-residue chain is ATP-dependent Clp protease proteolytic subunit (200 aa).

Ser-103 serves as the catalytic Nucleophile. Residue His-128 is part of the active site.

Belongs to the peptidase S14 family. In terms of assembly, fourteen ClpP subunits assemble into 2 heptameric rings which stack back to back to give a disk-like structure with a central cavity, resembling the structure of eukaryotic proteasomes.

Its subcellular location is the cytoplasm. It catalyses the reaction Hydrolysis of proteins to small peptides in the presence of ATP and magnesium. alpha-casein is the usual test substrate. In the absence of ATP, only oligopeptides shorter than five residues are hydrolyzed (such as succinyl-Leu-Tyr-|-NHMec, and Leu-Tyr-Leu-|-Tyr-Trp, in which cleavage of the -Tyr-|-Leu- and -Tyr-|-Trp bonds also occurs).. Its function is as follows. Cleaves peptides in various proteins in a process that requires ATP hydrolysis. Has a chymotrypsin-like activity. Plays a major role in the degradation of misfolded proteins. This is ATP-dependent Clp protease proteolytic subunit from Vibrio parahaemolyticus serotype O3:K6 (strain RIMD 2210633).